A 617-amino-acid polypeptide reads, in one-letter code: Glutamyl-tRNA(Gln) amidotransferase subunit E (617 aa).

The protein belongs to the GatB/GatE family. GatE subfamily. Heterodimer of GatD and GatE.

It carries out the reaction L-glutamyl-tRNA(Gln) + L-glutamine + ATP + H2O = L-glutaminyl-tRNA(Gln) + L-glutamate + ADP + phosphate + H(+). In terms of biological role, allows the formation of correctly charged Gln-tRNA(Gln) through the transamidation of misacylated Glu-tRNA(Gln) in organisms which lack glutaminyl-tRNA synthetase. The reaction takes place in the presence of glutamine and ATP through an activated gamma-phospho-Glu-tRNA(Gln). The GatDE system is specific for glutamate and does not act on aspartate. The sequence is that of Glutamyl-tRNA(Gln) amidotransferase subunit E from Natronomonas pharaonis (strain ATCC 35678 / DSM 2160 / CIP 103997 / JCM 8858 / NBRC 14720 / NCIMB 2260 / Gabara) (Halobacterium pharaonis).